The primary structure comprises 290 residues: Lipoyl synthase 2 (290 aa).

The [4Fe-4S] cluster site is built by cysteine 37, cysteine 42, cysteine 48, cysteine 63, cysteine 67, cysteine 70, and serine 283. Positions 49 to 272 (YGQKTATFLL…GNIARELGFS (224 aa)) constitute a Radical SAM core domain.

This sequence belongs to the radical SAM superfamily. Lipoyl synthase family. The cofactor is [4Fe-4S] cluster.

The protein localises to the cytoplasm. The catalysed reaction is [[Fe-S] cluster scaffold protein carrying a second [4Fe-4S](2+) cluster] + N(6)-octanoyl-L-lysyl-[protein] + 2 oxidized [2Fe-2S]-[ferredoxin] + 2 S-adenosyl-L-methionine + 4 H(+) = [[Fe-S] cluster scaffold protein] + N(6)-[(R)-dihydrolipoyl]-L-lysyl-[protein] + 4 Fe(3+) + 2 hydrogen sulfide + 2 5'-deoxyadenosine + 2 L-methionine + 2 reduced [2Fe-2S]-[ferredoxin]. It participates in protein modification; protein lipoylation via endogenous pathway; protein N(6)-(lipoyl)lysine from octanoyl-[acyl-carrier-protein]: step 2/2. Catalyzes the radical-mediated insertion of two sulfur atoms into the C-6 and C-8 positions of the octanoyl moiety bound to the lipoyl domains of lipoate-dependent enzymes, thereby converting the octanoylated domains into lipoylated derivatives. The chain is Lipoyl synthase 2 from Thermosynechococcus vestitus (strain NIES-2133 / IAM M-273 / BP-1).